A 1056-amino-acid polypeptide reads, in one-letter code: MLSVVENGLDPQAAIPVIKKKLVGSVKALQKQYVSLDTVVTSEDGDANTMCSALEAVFIHGLHAKHIRAEAGGKRKKSAHQKPLPQPVFWPLLKAVTHKHIISELEHLTFVNTDVGRCRAWLRLALNDGLMECYLKLLLQEQARLHEYYQPTALLRDAEEGEFLLSFLQGLTSLSFELSYKSAILNEWTLTPLALSGLCPLSELDPLSTSGAELQRKESLDSISHSSGSEDIEVHHSGHKIRRNQKLTASSLSLDTASSSQLSCSLNSDSCLLQENGSKSPDHCEEPMSCDSDLGTANAEDSDRSLQEVLLEFSKAQVNSVPTNGLSQETEIPTPQASLSLHGLNTSTYLHCEAPAEPLPAQAASGTQDGVHVQEPRPQAPSPLDLQQPVESTSGQQPSSTVSETAREVGQGNGLQKAQAHDGAGLKLVVSSPTSPKNKSWISEDDFYRPSREQPLESASDHPIASYRGTPGSRPGLHRHFSQEPRKNCSLGALDQACVPSPGRRQAQAAPSQGHKSFRVVHRRQMGLSNPFRGLMKLGTVERRGAMGIWKELFCELSPLEFRLYLSNEEHTCVENCSLLRCESVGPAHSDGRFELVFSGKKLALRASSQDEAEDWLDRVREALQKVRPQQEDEWVNVQYPDQPEEPPEAPQGCLSPSDLLSEPAALQGTQFDWSSAQVPEPDAIKESLLYLYMDRTWMPYIFSLSLEALKCFRIRNNEKMLSDSHGVETIRDILPDTSLGGPSFFKIITAKAVLKLQAGNAEEAALWRDLVRKVLASYLETAEEAVTLGGSLDENCQEVLKFATRENGFLLQYLVAIPMEKGLDSQGCFCAGCSRQIGFSFVRPKLCAFSGLYYCDICHQDDASVIPARIIHNWDLTKRPICRQALKFLTQIRAQPLINLQMVNASLYEHVERMHLIGRRREQLKLLGDYLGLCRSGALKELSKRLNHRNYLLESPHRFSVADLQQIADGVYEGFLKALIEFASQHVYHCDLCTQRGFICQICQHHDIIFPFEFDTTVRCAECKTVFHQSCQAVVKKGCPRCARRRKYQEQNIFA.

Residues 41–183 enclose the RUN domain; the sequence is TSEDGDANTM…LSFELSYKSA (143 aa). 3 disordered regions span residues 215–245, 277–303, and 360–422; these read QRKE…RRNQ, GSKS…EDSD, and PAQA…QAHD. S219 is modified (phosphoserine). A compositionally biased stretch (polar residues) spans 389–404; it reads PVESTSGQQPSSTVSE. Residues S432 and S435 each carry the phosphoserine modification. The interval 451–483 is disordered; the sequence is SREQPLESASDHPIASYRGTPGSRPGLHRHFSQ. Position 490 is a phosphoserine (S490). The PH 1 domain occupies 534 to 625; it reads GLMKLGTVER…WLDRVREALQ (92 aa). The LIR motif lies at 632-638; it reads EDEWVNV. The interaction with RAB7A stretch occupies residues 654 to 1056; it reads CLSPSDLLSE…RKYQEQNIFA (403 aa). Residues 683–777 enclose the PH 2 domain; sequence DAIKESLLYL…WRDLVRKVLA (95 aa). The Phorbol-ester/DAG-type zinc-finger motif lies at 986 to 1040; sequence QHVYHCDLCTQRGFICQICQHHDIIFPFEFDTTVRCAECKTVFHQSCQAVVKKGC.

In terms of assembly, interacts (via N- and C-terminus) with RAB7A (GTP-bound form). Simultaneously interacts with RAB7A and ARL8B; bringing about clustering and fusion of late endosomes and lysosomes. Interacts (via RUN domain) with ARL8B (GTP-bound form); the interaction is required for PLEKHM1 localization to lysosomes and for ARL8B function in delivery and degradation of endocytic and autophagic cargo in lysosomes. PLEKHM1 and PLEKHM2 compete for interaction with ARL8B. Interacts with ARL8A; the interaction is weaker than with ARL8B. Interacts with VPS41, VPS11, VPS18, VPS33A and VPS39; indicative for an association with the HOPS complex; the interactions with, at least, VPS41, VPS11, VPS18 and VPS33A require ARL8B. Interacts with GABARAP, GABARAPL, GABARAPL2, MAP1LC3A, MAP1LC3B and MAP1LC3C. Interacts with PAFAH1B. Interacts (via N- and C-terminus) with NDEL1. Interacts (via C-terminus) with MAP3K7. Interacts (via N- and C-terminus) with FAM98A. Interacts (via C-terminus) with DEF8; this interaction is weak but increased in a RAB7A-dependent manner. In colon carcinoma and breast carcinoma cells, it interacts with sialyl-lex-positive protein. (Microbial infection) Interacts with Salmonella typhimurium sifA. In terms of tissue distribution, expressed in placenta, liver, prostate, thymus, spleen, ovary, colon, colon carcinoma and peripheral blood lymphocytes (PBL). Weakly expressed in brain, lung, kidney, and testis. No expression in heart, skeletal muscle, pancreas and small intestine. Predominantly expressed in the breast carcinoma cell line MCF-7.

It localises to the autolysosome membrane. The protein resides in the endosome membrane. Its subcellular location is the late endosome membrane. It is found in the lysosome membrane. In terms of biological role, acts as a multivalent adapter protein that regulates Rab7-dependent and HOPS complex-dependent fusion events in the endolysosomal system and couples autophagic and the endocytic trafficking pathways. Acts as a dual effector of RAB7A and ARL8B that simultaneously binds these GTPases, bringing about clustering and fusion of late endosomes and lysosomes. Required for late stages of endolysosomal maturation, facilitating both endocytosis-mediated degradation of growth factor receptors and autophagosome clearance. Interaction with Arl8b is a crucial factor in the terminal maturation of autophagosomes and to mediate autophagosome-lysosome fusion. Positively regulates lysosome peripheral distribution and ruffled border formation in osteoclasts. May be involved in negative regulation of endocytic transport from early endosome to late endosome/lysosome implicating its association with Rab7. May have a role in sialyl-lex-mediated transduction of apoptotic signals. Involved in bone resorption. Its function is as follows. (Microbial infection) In case of infection contributes to Salmonella typhimurium pathogenesis by supporting the integrity of the Salmonella-containing vacuole (SCV) probably in concert with the HOPS complex and Rab7. The polypeptide is Pleckstrin homology domain-containing family M member 1 (Homo sapiens (Human)).